The chain runs to 335 residues: Protease HtpX homolog (335 aa).

Transmembrane regions (helical) follow at residues 9–29, 42–62, and 64–84; these read VYMM…STIA, LFTS…AIIY, and ILAY…LLII. Histidine 168 contacts Zn(2+). Glutamate 169 is a catalytic residue. Histidine 172 is a Zn(2+) binding site. 2 consecutive transmembrane segments (helical) span residues 179–199 and 213–233; these read AVML…YALL and AAIG…VLAF. Glutamate 238 contributes to the Zn(2+) binding site.

It belongs to the peptidase M48B family. Requires Zn(2+) as cofactor.

Its subcellular location is the cell membrane. The protein is Protease HtpX homolog of Archaeoglobus fulgidus (strain ATCC 49558 / DSM 4304 / JCM 9628 / NBRC 100126 / VC-16).